Reading from the N-terminus, the 374-residue chain is Zinc finger CCCH domain-containing protein 15 homolog (374 aa).

Residues 1–20 are disordered; it reads MPPKQQGPSKKSEQKRKEKV. Over residues 10 to 20 the composition is skewed to basic and acidic residues; it reads KKSEQKRKEKV. 2 C3H1-type zinc fingers span residues 90–117 and 166–199; these read DPKSLLCVFFKQGLCGKGAKCKFSHDLA and VCKYFLEAVENNKYGWFWECPNGGEKCQYRHCLP.

This sequence belongs to the ZC3H15/TMA46 family.

This is Zinc finger CCCH domain-containing protein 15 homolog from Caenorhabditis elegans.